Reading from the N-terminus, the 227-residue chain is MTRKQMELLDFIKTRMDRDGVPPSFDEMKDALDLRSKSGIHRLITALEERGFIRRLAHRARAIEIVKLPEAMERAGFSARAAKAAAAPLPKGAVTVETAGALDLPLMGRIAAGLPIEAINGGPQSVTVPGMMLSGRGQHYALEVKGDSMIAAGINDGDIVVIREQQTADNGDIVVALVADHEATLKRYRRRGGMIALEPANDSYETQVYPEQMVKVQGRLVGLIRSY.

The H-T-H motif DNA-binding region spans 25–45 (FDEMKDALDLRSKSGIHRLIT). Catalysis depends on for autocatalytic cleavage activity residues Ser-148 and Lys-186.

This sequence belongs to the peptidase S24 family. In terms of assembly, homodimer.

The catalysed reaction is Hydrolysis of Ala-|-Gly bond in repressor LexA.. Functionally, represses a number of genes involved in the response to DNA damage (SOS response), including recA and lexA. In the presence of single-stranded DNA, RecA interacts with LexA causing an autocatalytic cleavage which disrupts the DNA-binding part of LexA, leading to derepression of the SOS regulon and eventually DNA repair. The polypeptide is LexA repressor (Cereibacter sphaeroides (strain ATCC 17029 / ATH 2.4.9) (Rhodobacter sphaeroides)).